The following is a 555-amino-acid chain: Formate--tetrahydrofolate ligase (555 aa).

Residue 64 to 71 coordinates ATP; that stretch reads TKAGIGKT.

It belongs to the formate--tetrahydrofolate ligase family.

It catalyses the reaction (6S)-5,6,7,8-tetrahydrofolate + formate + ATP = (6R)-10-formyltetrahydrofolate + ADP + phosphate. It functions in the pathway one-carbon metabolism; tetrahydrofolate interconversion. This Bacteroides fragilis (strain ATCC 25285 / DSM 2151 / CCUG 4856 / JCM 11019 / LMG 10263 / NCTC 9343 / Onslow / VPI 2553 / EN-2) protein is Formate--tetrahydrofolate ligase.